A 160-amino-acid chain; its full sequence is 2-C-methyl-D-erythritol 2,4-cyclodiphosphate synthase (160 aa).

Aspartate 11 and histidine 13 together coordinate a divalent metal cation. Residues 11 to 13 (DVH) and 37 to 38 (HS) contribute to the 4-CDP-2-C-methyl-D-erythritol 2-phosphate site. Histidine 45 provides a ligand contact to a divalent metal cation. 4-CDP-2-C-methyl-D-erythritol 2-phosphate is bound by residues 59 to 61 (DIG) and arginine 145.

This sequence belongs to the IspF family. As to quaternary structure, homotrimer. Requires a divalent metal cation as cofactor.

The catalysed reaction is 4-CDP-2-C-methyl-D-erythritol 2-phosphate = 2-C-methyl-D-erythritol 2,4-cyclic diphosphate + CMP. It functions in the pathway isoprenoid biosynthesis; isopentenyl diphosphate biosynthesis via DXP pathway; isopentenyl diphosphate from 1-deoxy-D-xylulose 5-phosphate: step 4/6. Its function is as follows. Involved in the biosynthesis of isopentenyl diphosphate (IPP) and dimethylallyl diphosphate (DMAPP), two major building blocks of isoprenoid compounds. Catalyzes the conversion of 4-diphosphocytidyl-2-C-methyl-D-erythritol 2-phosphate (CDP-ME2P) to 2-C-methyl-D-erythritol 2,4-cyclodiphosphate (ME-CPP) with a corresponding release of cytidine 5-monophosphate (CMP). This chain is 2-C-methyl-D-erythritol 2,4-cyclodiphosphate synthase, found in Neisseria meningitidis serogroup A / serotype 4A (strain DSM 15465 / Z2491).